The following is a 405-amino-acid chain: 4-hydroxy-3-methylbut-2-enyl diphosphate reductase (405 aa).

Cys66 is a binding site for [4Fe-4S] cluster. His96 is a binding site for (2E)-4-hydroxy-3-methylbut-2-enyl diphosphate. Position 96 (His96) interacts with dimethylallyl diphosphate. His96 contacts isopentenyl diphosphate. Position 157 (Cys157) interacts with [4Fe-4S] cluster. His185 is a (2E)-4-hydroxy-3-methylbut-2-enyl diphosphate binding site. His185 contributes to the dimethylallyl diphosphate binding site. His185 provides a ligand contact to isopentenyl diphosphate. The active-site Proton donor is Glu187. Thr250 provides a ligand contact to (2E)-4-hydroxy-3-methylbut-2-enyl diphosphate. Cys288 is a binding site for [4Fe-4S] cluster. (2E)-4-hydroxy-3-methylbut-2-enyl diphosphate-binding residues include Ser317, Ser318, Asn319, and Ser380. 4 residues coordinate dimethylallyl diphosphate: Ser317, Ser318, Asn319, and Ser380. The isopentenyl diphosphate site is built by Ser317, Ser318, Asn319, and Ser380.

It belongs to the IspH family. Requires [4Fe-4S] cluster as cofactor.

It catalyses the reaction isopentenyl diphosphate + 2 oxidized [2Fe-2S]-[ferredoxin] + H2O = (2E)-4-hydroxy-3-methylbut-2-enyl diphosphate + 2 reduced [2Fe-2S]-[ferredoxin] + 2 H(+). The enzyme catalyses dimethylallyl diphosphate + 2 oxidized [2Fe-2S]-[ferredoxin] + H2O = (2E)-4-hydroxy-3-methylbut-2-enyl diphosphate + 2 reduced [2Fe-2S]-[ferredoxin] + 2 H(+). The protein operates within isoprenoid biosynthesis; dimethylallyl diphosphate biosynthesis; dimethylallyl diphosphate from (2E)-4-hydroxy-3-methylbutenyl diphosphate: step 1/1. Its pathway is isoprenoid biosynthesis; isopentenyl diphosphate biosynthesis via DXP pathway; isopentenyl diphosphate from 1-deoxy-D-xylulose 5-phosphate: step 6/6. In terms of biological role, catalyzes the conversion of 1-hydroxy-2-methyl-2-(E)-butenyl 4-diphosphate (HMBPP) into a mixture of isopentenyl diphosphate (IPP) and dimethylallyl diphosphate (DMAPP). Acts in the terminal step of the DOXP/MEP pathway for isoprenoid precursor biosynthesis. The chain is 4-hydroxy-3-methylbut-2-enyl diphosphate reductase from Prochlorococcus marinus (strain SARG / CCMP1375 / SS120).